The following is a 150-amino-acid chain: MSLQFNMIALLLVILILLGIFSHNSSITISAAVLLIMQQTLLAKYIPYLEKYGLSIGIVILTIGVLSPLVSGKIQLPGLSAFVSWKMFVAIAVGVFVAWLAGKGVPLMGEQPVLVTGLVIGTIIGVSFLGGIPVGPLIAAGILAVLIGKF.

4 helical membrane-spanning segments follow: residues 1–21 (MSLQ…LGIF), 52–72 (YGLS…LVSG), 81–101 (AFVS…AWLA), and 128–148 (FLGG…VLIG).

It belongs to the UPF0756 family.

It is found in the cell membrane. In Aggregatibacter aphrophilus (strain NJ8700) (Haemophilus aphrophilus), this protein is UPF0756 membrane protein NT05HA_0561.